A 268-amino-acid polypeptide reads, in one-letter code: MADQSIISALVLGLIEGLTEFIPVSSTAHVLLAGHFLGFRSPGNTFAVLIQLGAILAILLVYFQKLLSIALALPTSVRARRFVLSVLLAFLPAALIGAAAHGFIKSVLFETPMLICVVLIVGGIILYVIDRLPLTPRYTDVFDYPPSLALKIGLFQCLAMIPGTSRSGATIAGALLMGTDKRSAAEFSFFLAMPTMVGAFALDLYKNREALSIDDIGLIAAGFIAAFIAGIFVVRSLLDFVSHRGFTPFAIWRILVGTAGLVGLWLLG.

Helical transmembrane passes span 5 to 25 (SIIS…IPVS), 43 to 63 (GNTF…LVYF), 84 to 104 (LSVL…HGFI), 109 to 129 (FETP…LYVI), 184 to 204 (AAEF…ALDL), 213 to 233 (IDDI…GIFV), and 248 to 268 (PFAI…WLLG).

The protein belongs to the UppP family.

The protein resides in the cell inner membrane. The enzyme catalyses di-trans,octa-cis-undecaprenyl diphosphate + H2O = di-trans,octa-cis-undecaprenyl phosphate + phosphate + H(+). Catalyzes the dephosphorylation of undecaprenyl diphosphate (UPP). Confers resistance to bacitracin. In Sinorhizobium medicae (strain WSM419) (Ensifer medicae), this protein is Undecaprenyl-diphosphatase.